Reading from the N-terminus, the 740-residue chain is Catalase-peroxidase (740 aa).

The segment covering 1–14 (MTENHDAIVTDAKS) has biased composition (basic and acidic residues). The tract at residues 1–21 (MTENHDAIVTDAKSEGSGGCP) is disordered. The segment at residues 108–231 (WHSAGTYRIS…LGAVQMGLIY (124 aa)) is a cross-link (tryptophyl-tyrosyl-methioninium (Trp-Tyr) (with M-257)). His109 (proton acceptor) is an active-site residue. Residues 231-257 (YVNPEGPNGNPDPIAAARDIRETFRRM) constitute a cross-link (tryptophyl-tyrosyl-methioninium (Tyr-Met) (with W-108)). Residue His272 coordinates heme b.

This sequence belongs to the peroxidase family. Peroxidase/catalase subfamily. Homodimer. It depends on heme b as a cofactor. Post-translationally, formation of the three residue Trp-Tyr-Met cross-link is important for the catalase, but not the peroxidase activity of the enzyme.

The enzyme catalyses H2O2 + AH2 = A + 2 H2O. It carries out the reaction 2 H2O2 = O2 + 2 H2O. Functionally, bifunctional enzyme with both catalase and broad-spectrum peroxidase activity. In Streptomyces reticuli, this protein is Catalase-peroxidase.